We begin with the raw amino-acid sequence, 793 residues long: Acetyl-CoA decarbonylase/synthase complex subunit alpha (793 aa).

[4Fe-4S] cluster is bound by residues C55, C58, C63, and C73. Residue H96 coordinates CO. 3 residues coordinate [Ni-4Fe-4S] cluster: H229, C257, and C309. 2 4Fe-4S ferredoxin-type domains span residues 393–422 (EQQF…ISEM) and 432–461 (EPFS…LKLY). C403, C406, C409, C413, C441, C444, C447, and C451 together coordinate [4Fe-4S] cluster. [Ni-4Fe-4S] cluster contacts are provided by C509, C538, and C573.

Belongs to the Ni-containing carbon monoxide dehydrogenase family. As to quaternary structure, heterotetramer of two alpha and two epsilon subunits. The ACDS complex is made up of alpha, epsilon, beta, gamma and delta subunits with a probable stoichiometry of (alpha(2)epsilon(2))(4)-beta(8)-(gamma(1)delta(1))(8). It depends on [4Fe-4S] cluster as a cofactor. [Ni-4Fe-4S] cluster is required as a cofactor.

The catalysed reaction is CO + 2 oxidized [2Fe-2S]-[ferredoxin] + H2O = 2 reduced [2Fe-2S]-[ferredoxin] + CO2 + 2 H(+). In terms of biological role, part of the ACDS complex that catalyzes the reversible cleavage of acetyl-CoA, allowing autotrophic growth from CO(2). The alpha-epsilon subcomponent functions as a carbon monoxide dehydrogenase. In Methanothrix soehngenii (Methanosaeta concilii), this protein is Acetyl-CoA decarbonylase/synthase complex subunit alpha.